The sequence spans 976 residues: Ephrin type-A receptor 1 (976 aa).

Residues 1–25 form the signal peptide; sequence MERRWPLGLGLVLLLCAPLPPGARA. The Extracellular portion of the chain corresponds to 26–547; sequence KEVTLMDTSK…PVSRGLTGGE (522 aa). The region spanning 27-209 is the Eph LBD domain; it reads EVTLMDTSKA…FYQRCPETLN (183 aa). Fibronectin type-III domains lie at 332-445 and 447-538; these read PPSA…MGHA and SLSG…TSPP. An N-linked (GlcNAc...) asparagine glycan is attached at Asn-414. The helical transmembrane segment at 548 to 568 threads the bilayer; the sequence is IVAVIFGLLLGAALLLGILVF. Residues 569-976 are Cytoplasmic-facing; sequence RSRRAQRQRQ…ILCSIQGFKD (408 aa). Phosphotyrosine; by autocatalysis occurs at positions 599 and 605. Residues 624–884 enclose the Protein kinase domain; it reads LMVDTVIGEG…KLQAHLEQLL (261 aa). Residues 630-638 and Lys-656 each bind ATP; that span reads IGEGEFGEV. The active-site Proton acceptor is Asp-749. Tyr-781 is modified (phosphotyrosine; by autocatalysis). Phosphoserine occurs at positions 906 and 910. In terms of domain architecture, SAM spans 913-976; sequence IPYRTVSEWL…ILCSIQGFKD (64 aa). Position 930 is a phosphotyrosine; by autocatalysis (Tyr-930). A PDZ-binding motif is present at residues 974 to 976; the sequence is FKD.

This sequence belongs to the protein kinase superfamily. Tyr protein kinase family. Ephrin receptor subfamily. In terms of assembly, homodimer. Forms a signaling complex with LCK; PTK2B/PYK2 and PI3-kinase upon activation by EFNA1; regulates T-lymphocytes migration. Interacts (via SAM domain) with ILK (via ANK repeats); stimulated by EFNA1 but independent of the kinase activity of EPHA1. Interacts (kinase activity-dependent) with PTK2/FAK1. Phosphorylated. Autophosphorylation is stimulated by its ligand EFNA1. Post-translationally, ubiquitinated. In terms of tissue distribution, overexpressed in several carcinomas.

The protein resides in the cell membrane. The catalysed reaction is L-tyrosyl-[protein] + ATP = O-phospho-L-tyrosyl-[protein] + ADP + H(+). Its function is as follows. Receptor tyrosine kinase which binds promiscuously membrane-bound ephrin-A family ligands residing on adjacent cells, leading to contact-dependent bidirectional signaling into neighboring cells. The signaling pathway downstream of the receptor is referred to as forward signaling while the signaling pathway downstream of the ephrin ligand is referred to as reverse signaling. Binds with a low affinity EFNA3 and EFNA4 and with a high affinity to EFNA1 which most probably constitutes its cognate/functional ligand. Upon activation by EFNA1 induces cell attachment to the extracellular matrix inhibiting cell spreading and motility through regulation of ILK and downstream RHOA and RAC. Also plays a role in angiogenesis and regulates cell proliferation. May play a role in apoptosis. The sequence is that of Ephrin type-A receptor 1 (EPHA1) from Homo sapiens (Human).